The primary structure comprises 198 residues: Peroxynitrite isomerase (198 aa).

Residues 20–26 carry the GXWXGXG motif; that stretch reads GVWEGTG. Heme b is bound at residue H189.

This sequence belongs to the nitrobindin family. As to quaternary structure, homodimer. Heme b serves as cofactor.

The enzyme catalyses peroxynitrite = nitrate. It functions in the pathway nitrogen metabolism. In terms of biological role, heme-binding protein able to scavenge peroxynitrite and to protect free L-tyrosine against peroxynitrite-mediated nitration, by acting as a peroxynitrite isomerase that converts peroxynitrite to nitrate. Therefore, this protein likely plays a role in peroxynitrite sensing and in the detoxification of reactive nitrogen and oxygen species (RNS and ROS, respectively). Is able to bind nitric oxide (NO) in vitro, but may act as a sensor of peroxynitrite levels in vivo. The polypeptide is Peroxynitrite isomerase (Leifsonia xyli subsp. xyli (strain CTCB07)).